The following is a 374-amino-acid chain: MGTAGKVIKCKAAVLWGVNQPFSIEEIEVAPPKAKEVRVKILATGICRTDDHIIKGSMVSKFPVIVGHEAVGVVESVGEGVTTVRPGDKVIPLFLPQCRECNACLNPEGNLCIRSDLTGRGVLADGTTRFTCKGKPVQHFMNTSTFTEYTVLDESSVAKVDGAAPPEKACLIGCGFSTGYGAAVKTAKVTPGSTCVVFGLGGVGLSVIMGCKAAGASRIIGIDINKDKFQKALAVGATECISPKDSTKPISEVLSDMTGNTIQYTFEVIGRLETMVDALSSCHMNYGTSVVVGAPPSAKMLTYDPMLLFTGRTWKGCVFGGWKSRDDVPKLVTEFLEKKFDLDQLITHTLPFNNINEGFELLYSGKSIRTVLTF.

Zn(2+)-binding residues include C47, H68, C98, C101, C104, C112, and C174. NAD(+) contacts are provided by residues 199–204 (GLGGVG), D223, K228, 292–294 (VGA), and R369.

The protein belongs to the zinc-containing alcohol dehydrogenase family. Class-IV subfamily. As to quaternary structure, homodimer. The cofactor is Zn(2+). As to expression, high expression in the stomach mucosa. Lower expression in eye, thymus, skin and ovary. Very low expression in small intestine, liver and uterus.

The protein localises to the cytoplasm. It catalyses the reaction a primary alcohol + NAD(+) = an aldehyde + NADH + H(+). The enzyme catalyses 10-hydroxydecanoate + NAD(+) = 10-oxodecanoate + NADH + H(+). It carries out the reaction all-trans-retinol + NAD(+) = all-trans-retinal + NADH + H(+). The catalysed reaction is 9-cis-retinol + NAD(+) = 9-cis-retinal + NADH + H(+). It catalyses the reaction all-trans-3,4-didehydroretinol + NAD(+) = all-trans-3,4-didehydroretinal + NADH + H(+). The enzyme catalyses all-trans-4-hydroxyretinol + NAD(+) = all-trans-4-hydroxyretinal + NADH + H(+). It carries out the reaction all-trans-4-oxoretinol + NAD(+) = all-trans-4-oxoretinal + NADH + H(+). The catalysed reaction is 12-hydroxydodecanoate + NAD(+) = 12-oxododecanoate + NADH + H(+). It catalyses the reaction 16-hydroxyhexadecanoate + NAD(+) = 16-oxohexadecanoate + NADH + H(+). The enzyme catalyses hexan-1-ol + NAD(+) = hexanal + NADH + H(+). It carries out the reaction (E)-hex-2-en-1-ol + NAD(+) = (E)-hex-2-enal + NADH + H(+). The catalysed reaction is (E)-4-hydroxynon-2-en-1-ol + NAD(+) = (E)-4-hydroxynon-2-enal + NADH + H(+). With respect to regulation, retinol oxidation is inhibited by the detergent Tween 80. Ethanol inhibits both all-trans-retinol and 9-cis-retinol oxidation. 13-cis-retinol is an effective competitive inhibitor of the 9-cis-retinol oxidation. All-trans-retinoic acid is a powerful inhibitor of all-trans-retinol oxidation. 13-cis-retinoic acid is a powerful inhibitor of all-trans-retinol oxidation. Cimetidine competitively inhibited ethanol oxidation. Its function is as follows. Catalyzes the NAD-dependent oxidation of all-trans-retinol, alcohol, aldehyde and omega-hydroxy fatty acids and their derivatives. Oxidizes preferentially all trans-retinol, all-trans-4-hydroxyretinol, 9-cis-retinol, 2-hexenol, and long chain omega-hydroxy fatty acids such as juniperic acid. In vitro can also catalyze the NADH-dependent reduction of all-trans-retinal and aldehydes and their derivatives. Reduces preferentially all trans-retinal, all-trans-4-oxoretinal and hexanal. Catalyzes in the oxidative direction with higher efficiency. Therefore may participate in retinoid metabolism, fatty acid omega-oxidation, and elimination of cytotoxic aldehydes produced by lipid peroxidation. This chain is All-trans-retinol dehydrogenase [NAD(+)] ADH7 (Adh7), found in Mus musculus (Mouse).